The following is a 284-amino-acid chain: Gigasin-3a (284 aa).

The segment at 202 to 284 (GLDNPLPNPR…FKAGRKNNRN (83 aa)) is disordered. Residues 223–245 (SSPLPESTPKSSTKTSSASPIKS) are compositionally biased toward low complexity. The segment covering 246–257 (RQGKKLRGKKQN) has biased composition (basic residues). A compositionally biased stretch (polar residues) spans 258-267 (KTGNTRFTYR). A compositionally biased stretch (basic residues) spans 268-284 (NNKRNIKFKAGRKNNRN).

Component of the organic matrix of calcified shell layers.

This Magallana gigas (Pacific oyster) protein is Gigasin-3a.